A 253-amino-acid chain; its full sequence is 3-deoxy-manno-octulosonate cytidylyltransferase (253 aa).

Belongs to the KdsB family.

The protein localises to the cytoplasm. The catalysed reaction is 3-deoxy-alpha-D-manno-oct-2-ulosonate + CTP = CMP-3-deoxy-beta-D-manno-octulosonate + diphosphate. It participates in nucleotide-sugar biosynthesis; CMP-3-deoxy-D-manno-octulosonate biosynthesis; CMP-3-deoxy-D-manno-octulosonate from 3-deoxy-D-manno-octulosonate and CTP: step 1/1. The protein operates within bacterial outer membrane biogenesis; lipopolysaccharide biosynthesis. Its function is as follows. Activates KDO (a required 8-carbon sugar) for incorporation into bacterial lipopolysaccharide in Gram-negative bacteria. This is 3-deoxy-manno-octulosonate cytidylyltransferase from Neisseria meningitidis serogroup C / serotype 2a (strain ATCC 700532 / DSM 15464 / FAM18).